The chain runs to 360 residues: Phosphoserine aminotransferase (360 aa).

An L-glutamate-binding site is contributed by Arg41. Positions 101, 152, 172, and 195 each coordinate pyridoxal 5'-phosphate. Lys196 carries the post-translational modification N6-(pyridoxal phosphate)lysine. Residue 237-238 (NT) coordinates pyridoxal 5'-phosphate.

This sequence belongs to the class-V pyridoxal-phosphate-dependent aminotransferase family. SerC subfamily. Homodimer. Pyridoxal 5'-phosphate is required as a cofactor.

It localises to the cytoplasm. The catalysed reaction is O-phospho-L-serine + 2-oxoglutarate = 3-phosphooxypyruvate + L-glutamate. It carries out the reaction 4-(phosphooxy)-L-threonine + 2-oxoglutarate = (R)-3-hydroxy-2-oxo-4-phosphooxybutanoate + L-glutamate. It participates in amino-acid biosynthesis; L-serine biosynthesis; L-serine from 3-phospho-D-glycerate: step 2/3. Its pathway is cofactor biosynthesis; pyridoxine 5'-phosphate biosynthesis; pyridoxine 5'-phosphate from D-erythrose 4-phosphate: step 3/5. In terms of biological role, catalyzes the reversible conversion of 3-phosphohydroxypyruvate to phosphoserine and of 3-hydroxy-2-oxo-4-phosphonooxybutanoate to phosphohydroxythreonine. The sequence is that of Phosphoserine aminotransferase from Burkholderia orbicola (strain MC0-3).